The following is a 435-amino-acid chain: Serine--tRNA ligase (435 aa).

Position 242–244 (242–244 (TAE)) interacts with L-serine. Residue 273–275 (RSE) participates in ATP binding. Glu-296 provides a ligand contact to L-serine. 360–363 (EISS) serves as a coordination point for ATP. Residue Ser-396 participates in L-serine binding.

The protein belongs to the class-II aminoacyl-tRNA synthetase family. Type-1 seryl-tRNA synthetase subfamily. Homodimer. The tRNA molecule binds across the dimer.

It is found in the cytoplasm. The enzyme catalyses tRNA(Ser) + L-serine + ATP = L-seryl-tRNA(Ser) + AMP + diphosphate + H(+). It catalyses the reaction tRNA(Sec) + L-serine + ATP = L-seryl-tRNA(Sec) + AMP + diphosphate + H(+). The protein operates within aminoacyl-tRNA biosynthesis; selenocysteinyl-tRNA(Sec) biosynthesis; L-seryl-tRNA(Sec) from L-serine and tRNA(Sec): step 1/1. Its function is as follows. Catalyzes the attachment of serine to tRNA(Ser). Is also able to aminoacylate tRNA(Sec) with serine, to form the misacylated tRNA L-seryl-tRNA(Sec), which will be further converted into selenocysteinyl-tRNA(Sec). The sequence is that of Serine--tRNA ligase from Vibrio cholerae serotype O1 (strain ATCC 39541 / Classical Ogawa 395 / O395).